The sequence spans 450 residues: Glucose-6-phosphate isomerase (450 aa).

The active-site Proton donor is Glu291. Catalysis depends on residues His312 and Lys426.

This sequence belongs to the GPI family.

The protein localises to the cytoplasm. It carries out the reaction alpha-D-glucose 6-phosphate = beta-D-fructose 6-phosphate. Its pathway is carbohydrate biosynthesis; gluconeogenesis. The protein operates within carbohydrate degradation; glycolysis; D-glyceraldehyde 3-phosphate and glycerone phosphate from D-glucose: step 2/4. Catalyzes the reversible isomerization of glucose-6-phosphate to fructose-6-phosphate. The protein is Glucose-6-phosphate isomerase of Clostridium novyi (strain NT).